A 266-amino-acid chain; its full sequence is MVKVTFNSALAQKEAKKDEPKSGEEALIIPPDAVAVDCKDPDDVVPVGQRRAWCWCMCFGLAFMLAGVILGGAYLYKYFALQPDDVYYCGIKYIKDDVILNEPSADAPAALYQTIEENIKIFEEEEVEFISVPVPEFADSDPANIVHDFNKKLTAYLDLNLDKCYVIPLNTSIVMPPRNLLELLINIKAGTYLPQSYLIHEHMVITDRIENIDHLGFFIYRLCHDKETYKLQRRETIKGIQKREASNCFAIRHFENKFAVETLICS.

Residues 1–54 (MVKVTFNSALAQKEAKKDEPKSGEEALIIPPDAVAVDCKDPDDVVPVGQRRAWC) are Cytoplasmic-facing. The helical; Signal-anchor for type II membrane protein transmembrane segment at 55-75 (WCMCFGLAFMLAGVILGGAYL) threads the bilayer. Residues 76–266 (YKYFALQPDD…KFAVETLICS (191 aa)) lie on the Lumenal side of the membrane. Residues 102–134 (EPSADAPAALYQTIEENIKIFEEEEVEFISVPV) form a necessary for interaction with APP and inhibitor effects on APP processing region. A BRICHOS domain is found at 137 to 231 (FADSDPANIV…LCHDKETYKL (95 aa)). 2 cysteine pairs are disulfide-bonded: cysteine 164–cysteine 223 and cysteine 248–cysteine 265. N-linked (GlcNAc...) asparagine glycosylation occurs at asparagine 170.

It belongs to the ITM2 family. Homodimer; disulfide-linked. Interacts with SPPL2A and SPPL2B. Interacts with APP. Mature BRI2 (mBRI2) interacts with the APP amyloid-beta A4 protein; the interaction occurs at the cell surface and in the endocytic compartments and enable alpha- and beta-secretase-induced APP cleavage inhibition. Mature BRI2 (mBRI2) interacts with the APP C99; the interaction occurs in the endocytic compartments and enable gamma-secretase-induced C99 cleavage inhibition. May form heterodimers with Bri23 peptide and APP amyloid-beta protein 40. Interacts with ADAM7 in sperm; the interaction increases following capacitation. The ectodomain C-terminal part of the imBRI2 is processed by furin producing a secreted Bri23 peptide and a mature BRI2, membrane form (mBRI2). The remaining part of the ectodomain of mBRI2 containing the BRICHOS domain is cleaved by ADAM10 and is secreted (BRI2C, soluble form). The membrane-bound N-terminal fragment (BRI2C, membrane form) is further proteolytically processed by SPPL2A and SPPL2B through regulated intramembrane proteolysis producing a secreted C-peptide and a BRI2 intracellular domain (BRI2 ICD) released in the cytosol. Shedding by ADAM10 facilitates intramembrane cleavage but is not absolutely required for BRI2 ICD generation. In terms of processing, glycosylation at Asn-170 is important for cell surface localization, but doesn't affect furin- and ADAM10-induced proteolytic processing. In terms of tissue distribution, ubiquitous. Expressed in brain.

Its subcellular location is the golgi apparatus membrane. The protein localises to the cell membrane. It localises to the endosome membrane. The protein resides in the secreted. In terms of biological role, plays a regulatory role in the processing of the amyloid-beta A4 precursor protein (APP) and acts as an inhibitor of the amyloid-beta peptide aggregation and fibrils deposition. Plays a role in the induction of neurite outgrowth. Functions as a protease inhibitor by blocking access of secretases to APP cleavage sites. Its function is as follows. Mature BRI2 (mBRI2) functions as a modulator of the amyloid-beta A4 precursor protein (APP) processing leading to a strong reduction in the secretion of secretase-processed amyloid-beta protein 40 and amyloid-beta protein 42. Functionally, bri23 peptide prevents aggregation of APP amyloid-beta protein 42 into toxic oligomers. The chain is Integral membrane protein 2B (ITM2B) from Homo sapiens (Human).